The sequence spans 387 residues: Protein RecA (387 aa).

An ATP-binding site is contributed by 80–87; that stretch reads GPESSGKT. The interval 348 to 387 is disordered; sequence LDDSEVAETEEETTASKTKAKAKKEEKXVETEEIELELQD. 2 stretches are compositionally biased toward acidic residues: residues 349 to 360 and 378 to 387; these read DDSEVAETEEET and TEEIELELQD.

Belongs to the RecA family.

The protein localises to the cytoplasm. Functionally, can catalyze the hydrolysis of ATP in the presence of single-stranded DNA, the ATP-dependent uptake of single-stranded DNA by duplex DNA, and the ATP-dependent hybridization of homologous single-stranded DNAs. It interacts with LexA causing its activation and leading to its autocatalytic cleavage. The protein is Protein RecA of Lactococcus lactis subsp. cremoris (Streptococcus cremoris).